The primary structure comprises 295 residues: Aquaporin NIP2-1 (295 aa).

2 consecutive transmembrane segments (helical) span residues 49-69 and 83-103; these read VVSE…AAGI and SVAG…ISGA. The short motif at 106 to 108 is the NPA 1 element; that stretch reads NPA. Transmembrane regions (helical) follow at residues 124 to 146, 164 to 184, and 192 to 212; these read VPFY…KAVL, SLVI…AVAT, and LAGL…GAVS. The NPA 2 signature appears at 217 to 219; sequence NPA. A helical transmembrane segment spans residues 230-250; that stretch reads LYTGLWIYFLGPVLGTLSGAW.

The protein belongs to the MIP/aquaporin (TC 1.A.8) family. NIP (TC 1.A.8.12) subfamily.

Its subcellular location is the membrane. Functionally, aquaporins facilitate the transport of water and small neutral solutes across cell membranes. The chain is Aquaporin NIP2-1 (NIP2-1) from Zea mays (Maize).